The sequence spans 122 residues: Large ribosomal subunit protein uL14c (122 aa).

The protein belongs to the universal ribosomal protein uL14 family. In terms of assembly, part of the 50S ribosomal subunit.

The protein resides in the plastid. Functionally, binds to 23S rRNA. This chain is Large ribosomal subunit protein uL14c, found in Cuscuta reflexa (Southern Asian dodder).